The sequence spans 307 residues: 2-dehydropantoate 2-reductase (307 aa).

Residues 7–12 (GSGAMG), Asn102, and Ala128 each bind NADP(+). A substrate-binding site is contributed by Asn102. The active-site Proton donor is Lys184. Substrate is bound by residues Asn188, Asn192, and Ser255. An NADP(+)-binding site is contributed by Glu268.

Belongs to the ketopantoate reductase family.

Its subcellular location is the cytoplasm. It catalyses the reaction (R)-pantoate + NADP(+) = 2-dehydropantoate + NADPH + H(+). It participates in cofactor biosynthesis; (R)-pantothenate biosynthesis; (R)-pantoate from 3-methyl-2-oxobutanoate: step 2/2. Its function is as follows. Catalyzes the NADPH-dependent reduction of ketopantoate into pantoic acid. This is 2-dehydropantoate 2-reductase (apbA) from Streptococcus pyogenes serotype M18 (strain MGAS8232).